The following is a 230-amino-acid chain: uncharacterized protein (230 aa).

Residues 1-11 (MPVPSVTVTTD) show a composition bias toward polar residues. Positions 1 to 88 (MPVPSVTVTT…TLKRPTSNSI (88 aa)) are disordered. Over residues 63-73 (DDQHRHSDVHS) the composition is skewed to basic and acidic residues. Residues 79 to 88 (TLKRPTSNSI) are compositionally biased toward polar residues. Serine 106 carries the post-translational modification Phosphoserine. Over residues 156 to 179 (LKREDSRVSSTKKEHINDHTDMHS) the composition is skewed to basic and acidic residues. A disordered region spans residues 156–203 (LKREDSRVSSTKKEHINDHTDMHSTRSKVTTNSQGSSLEPNKLNMAVE). Residues 182-194 (SKVTTNSQGSSLE) are compositionally biased toward polar residues.

This is an uncharacterized protein from Saccharomyces cerevisiae (strain ATCC 204508 / S288c) (Baker's yeast).